A 324-amino-acid chain; its full sequence is Olfactory receptor 5T17 (324 aa).

Residues 1-37 (MPRTPSYTNTKTTQVNNVTEITVFILLGFTDDVDMNI) are Extracellular-facing. A glycan (N-linked (GlcNAc...) asparagine) is linked at N17. The chain crosses the membrane as a helical span at residues 38–58 (FLFILFLAIYVVTLIGNLGLV). The Cytoplasmic portion of the chain corresponds to 59-66 (VLVIEDSR). Residues 67 to 87 (LHNPMYYFLTVLSSLDACFSS) traverse the membrane as a helical segment. Residues 88–111 (VLTPKMLVNFLSKNKSISFAGCAT) lie on the Extracellular side of the membrane. N101 carries an N-linked (GlcNAc...) asparagine glycan. Residues C109 and C201 are joined by a disulfide bond. A helical transmembrane segment spans residues 112–132 (QMLLFVTFGTTECFLLAAMAY). At 133–145 (DRYLAIYSPLLYA) the chain is on the cytoplasmic side. Residues 146–166 (VRMSPRVYVPLIIASYTGGIL) traverse the membrane as a helical segment. At 167-208 (HATIHTVATFSLSFCGSNEIRHVFCDIPPLLALSCSDTHLNQ) the chain is on the extracellular side. Residues 209–229 (LLLFYCAGSIELITILIVLVS) traverse the membrane as a helical segment. Over 230–249 (YGFVLLAILKINSAEGRRKI) the chain is Cytoplasmic. A helical transmembrane segment spans residues 250-270 (FSTCGAHLTGVSIFHGTILFM). Topologically, residues 271–283 (YVRPSSNYTLEQD) are extracellular. An N-linked (GlcNAc...) asparagine glycan is attached at N277. Residues 284–304 (MVVSTFYTIVIPMLNPIIYSL) form a helical membrane-spanning segment. The Cytoplasmic portion of the chain corresponds to 305-324 (RNKDVKEAMRKLLKRKLVHE).

This sequence belongs to the G-protein coupled receptor 1 family.

The protein localises to the cell membrane. Potential odorant receptor. The sequence is that of Olfactory receptor 5T17 from Mus musculus (Mouse).